The sequence spans 260 residues: Granzyme A (260 aa).

A signal peptide spans 1 to 26 (MRNASGPRGPSLATLLFLLLIPEGGC). Residues 27 to 28 (ER) constitute a propeptide, activation peptide. Positions 29–257 (IIGGDTVVPH…HLNWIKKIMK (229 aa)) constitute a Peptidase S1 domain. A disulfide bridge links Cys-54 with Cys-70. Active-site charge relay system residues include His-69 and Asp-113. Cystine bridges form between Cys-147–Cys-217, Cys-178–Cys-196, and Cys-207–Cys-232. Asn-157 and Asn-169 each carry an N-linked (GlcNAc...) asparagine glycan. Ser-211 (charge relay system) is an active-site residue.

It belongs to the peptidase S1 family. Granzyme subfamily. In terms of assembly, homodimer; disulfide-linked. Interacts with APEX1. Found in cytotoxic lymphocytes and in normal lymphoid tissues such as thymus and spleen. In terms of tissue distribution, more abundant in lymphoid tissues than isoform HF2.

Its subcellular location is the secreted. It localises to the cytoplasmic granule. It carries out the reaction Hydrolysis of proteins, including fibronectin, type IV collagen and nucleolin. Preferential cleavage: -Arg-|-Xaa-, -Lys-|-Xaa- &gt;&gt; -Phe-|-Xaa- in small molecule substrates.. In terms of biological role, abundant protease in the cytosolic granules of cytotoxic T-cells and NK-cells which activates caspase-independent pyroptosis when delivered into the target cell through the immunological synapse. It cleaves after Lys or Arg. Cleaves APEX1 after 'Lys-31' and destroys its oxidative repair activity. Cleaves the nucleosome assembly protein SET after 'Lys-189', which disrupts its nucleosome assembly activity and allows the SET complex to translocate into the nucleus to nick and degrade the DNA. This chain is Granzyme A (Gzma), found in Mus musculus (Mouse).